Here is a 155-residue protein sequence, read N- to C-terminus: Eosinophil cationic protein (155 aa).

Residues 1-25 form the signal peptide; that stretch reads MGLKLLESRLCLLLSLGLVLMLASC. His38 (proton acceptor) is an active-site residue. Cystine bridges form between Cys47/Cys106, Cys61/Cys118, Cys79/Cys133, and Cys86/Cys94. Position 62 to 66 (62 to 66) interacts with substrate; that stretch reads KDINT. Asn88 and Asn107 each carry an N-linked (GlcNAc...) asparagine glycan. His150 acts as the Proton donor in catalysis.

The protein belongs to the pancreatic ribonuclease family.

Its subcellular location is the cytoplasmic granule. Its function is as follows. Cytotoxin and helminthotoxin with ribonuclease activity. Possesses a wide variety of biological activities. The sequence is that of Eosinophil cationic protein (Rnase3) from Rattus norvegicus (Rat).